The following is a 461-amino-acid chain: Juvenile hormone epoxide hydrolase (461 aa).

A helical transmembrane segment spans residues 4–24 (LLFIALPLLVLASIPLYLLVL). Residue Asp-227 is the Nucleophile of the active site. The active-site Proton donor is Tyr-373. Residue His-430 is the Proton acceptor of the active site.

This sequence belongs to the peptidase S33 family. In terms of assembly, homodimer. In terms of tissue distribution, expressed in fat body, foregut and midgut but not in brain, subesophageal ganglia or silk gland of larvae on day 1 of fifth instar.

Its subcellular location is the microsome membrane. The protein localises to the endoplasmic reticulum membrane. The catalysed reaction is cis-stilbene oxide + H2O = (1R,2R)-hydrobenzoin. It carries out the reaction 1-(4-methoxyphenyl)-N-methyl-N-[(3-methyloxetan-3-yl)methyl]methanamine + H2O = 2-{[(4-methoxybenzyl)(methyl)amino]methyl}-2-methylpropane-1,3-diol. Catalyzes juvenile hormone hydrolysis. Degrades juvenile hormone III (JH III) about 3 times and 5 times slower than juvenile hormone I (JH I) and II (JH II), respectively. Degrades cis-stilbene oxide and trans-stilbene oxide about 18 and 43 times slower than JH III, respectively. The polypeptide is Juvenile hormone epoxide hydrolase (Bombyx mori (Silk moth)).